Reading from the N-terminus, the 170-residue chain is Alpha-crystallin A chain (170 aa).

Met1 bears the N-acetylmethionine mark. A required for complex formation with BFSP1 and BFSP2 region spans residues 1 to 63; sequence MDVTIQHPWF…RTVLDSGISE (63 aa). At Gln6 the chain carries Deamidated glutamine; partial. Ser45 is modified (phosphoserine). At Gln50 the chain carries Deamidated glutamine; partial. A sHSP domain is found at 52–161; the sequence is LFRTVLDSGI…SERTIPVSRE (110 aa). N6-acetyllysine is present on residues Lys70 and Lys99. Residue His100 participates in Zn(2+) binding. At Asn101 the chain carries Deamidated asparagine; partial. Residues Glu102, His107, and His151 each coordinate Zn(2+). A disordered region spans residues 144-170; sequence PKIVDPSHSERTIPVSREEKPSSAPSS. Residues 148-164 are compositionally biased toward basic and acidic residues; that stretch reads DPSHSERTIPVSREEKP. The O-linked (GlcNAc) serine glycan is linked to Ser159.

The protein belongs to the small heat shock protein (HSP20) family. As to quaternary structure, heteromer composed of three CRYAA and one CRYAB subunits. Inter-subunit bridging via zinc ions enhances stability, which is crucial as there is no protein turn over in the lens. Can also form homodimers and homotetramers (dimers of dimers) which serve as the building blocks of homooligomers. Within homooligomers, the zinc-binding motif is created from residues of 3 different molecules. His-100 and Glu-102 from one molecule are ligands of the zinc ion, and His-107 and His-151 residues from additional molecules complete the site with tetrahedral coordination geometry. Part of a complex required for lens intermediate filament formation composed of BFSP1, BFSP2 and CRYAA. Acetylation at Lys-70 may increase chaperone activity. In terms of processing, undergoes age-dependent proteolytical cleavage at the C-terminus.

It is found in the cytoplasm. The protein resides in the nucleus. Contributes to the transparency and refractive index of the lens. Acts as a chaperone, preventing aggregation of various proteins under a wide range of stress conditions. Required for the correct formation of lens intermediate filaments as part of a complex composed of BFSP1, BFSP2 and CRYAA. In Choloepus hoffmanni (Hoffmann's two-fingered sloth), this protein is Alpha-crystallin A chain (CRYAA).